A 181-amino-acid polypeptide reads, in one-letter code: MFGLKQFYQSEVRTKLAQELDIKNPMLLPKLEKIVISVGAGAHAKDMKIMQNIAQTISLIAGQKAVITKAKKSVAGFKIREGMAVGAKVTLRNKRMYNFLEKLIVISLPRVKDFRGISRNGFDGCGNYTFGINEQLIFPEVVYDDIMVSHGMNITMVTSTDNDKEAFKLLELLGLPFAKVR.

Belongs to the universal ribosomal protein uL5 family. Part of the 50S ribosomal subunit; part of the 5S rRNA/L5/L18/L25 subcomplex. Contacts the 5S rRNA and the P site tRNA. Forms a bridge to the 30S subunit in the 70S ribosome.

In terms of biological role, this is one of the proteins that bind and probably mediate the attachment of the 5S RNA into the large ribosomal subunit, where it forms part of the central protuberance. In the 70S ribosome it contacts protein S13 of the 30S subunit (bridge B1b), connecting the 2 subunits; this bridge is implicated in subunit movement. Contacts the P site tRNA; the 5S rRNA and some of its associated proteins might help stabilize positioning of ribosome-bound tRNAs. In Helicobacter pylori (strain ATCC 700392 / 26695) (Campylobacter pylori), this protein is Large ribosomal subunit protein uL5.